The following is a 447-amino-acid chain: DNA primase DnaG (447 aa).

The region spanning 200–274 is the Toprim domain; sequence DSIIVVEGRA…DIDYVARAPE (75 aa). Positions 206, 248, and 250 each coordinate Mg(2+). Residues 316–339 form a disordered region; sequence ERRRGGARKQEYTKKGSLNPQPQV.

This sequence belongs to the archaeal DnaG primase family. Forms a ternary complex with MCM helicase and DNA. Component of the archaeal exosome complex. Mg(2+) serves as cofactor.

It carries out the reaction ssDNA + n NTP = ssDNA/pppN(pN)n-1 hybrid + (n-1) diphosphate.. RNA polymerase that catalyzes the synthesis of short RNA molecules used as primers for DNA polymerase during DNA replication. Also part of the exosome, which is a complex involved in RNA degradation. Acts as a poly(A)-binding protein that enhances the interaction between heteromeric, adenine-rich transcripts and the exosome. This Pyrococcus furiosus (strain ATCC 43587 / DSM 3638 / JCM 8422 / Vc1) protein is DNA primase DnaG.